We begin with the raw amino-acid sequence, 432 residues long: D-amino acid dehydrogenase (432 aa).

Residue 3-17 (VVILGSGVVGVASAW) coordinates FAD.

This sequence belongs to the DadA oxidoreductase family. FAD serves as cofactor.

It catalyses the reaction a D-alpha-amino acid + A + H2O = a 2-oxocarboxylate + AH2 + NH4(+). Its pathway is amino-acid degradation; D-alanine degradation; NH(3) and pyruvate from D-alanine: step 1/1. Its function is as follows. Oxidative deamination of D-amino acids. In Shigella sonnei (strain Ss046), this protein is D-amino acid dehydrogenase.